The sequence spans 494 residues: Alpha-amylase (494 aa).

The signal sequence occupies residues Met1 to Arg26. Cys57 and Cys65 are oxidised to a cystine. Trp110 serves as a coordination point for substrate. Asn148 is a Ca(2+) binding site. Residue His149 coordinates substrate. Cys177 and Cys191 are oxidised to a cystine. Ca(2+) is bound at residue Asp202. Asn224 carries N-linked (GlcNAc...) asparagine glycosylation. Residue Arg231 coordinates substrate. Ca(2+) is bound by residues Asp233, His237, and Glu257. The Nucleophile role is filled by Asp233. Lys236–His237 lines the substrate pocket. Catalysis depends on Glu257, which acts as the Proton donor. Gly261 contacts substrate. Residues Cys267 and Cys310 are joined by a disulfide bond. Substrate contacts are provided by Asp324 and Arg371. Residues Cys462 and Cys493 are joined by a disulfide bond.

The protein belongs to the glycosyl hydrolase 13 family. The cofactor is Ca(2+).

The protein resides in the secreted. The catalysed reaction is Endohydrolysis of (1-&gt;4)-alpha-D-glucosidic linkages in polysaccharides containing three or more (1-&gt;4)-alpha-linked D-glucose units.. This Saccharomycopsis fibuligera (Yeast) protein is Alpha-amylase (ALP1).